The primary structure comprises 104 residues: Small ribosomal subunit protein bS18c (104 aa).

Residues D84–K104 form a disordered region.

The protein belongs to the bacterial ribosomal protein bS18 family. As to quaternary structure, part of the 30S ribosomal subunit.

It is found in the plastid. It localises to the chloroplast. The sequence is that of Small ribosomal subunit protein bS18c from Cucumis sativus (Cucumber).